The chain runs to 599 residues: Aspartate--tRNA(Asp/Asn) ligase (599 aa).

Residue glutamate 173 coordinates L-aspartate. Positions 197–200 (QLYK) are aspartate. Arginine 219 serves as a coordination point for L-aspartate. ATP-binding positions include 219–221 (RDE) and glutamine 228. Histidine 451 serves as a coordination point for L-aspartate. Glutamate 484 lines the ATP pocket. An L-aspartate-binding site is contributed by arginine 491. 536–539 (GLDR) serves as a coordination point for ATP.

Belongs to the class-II aminoacyl-tRNA synthetase family. Type 1 subfamily. As to quaternary structure, homodimer.

Its subcellular location is the cytoplasm. It carries out the reaction tRNA(Asx) + L-aspartate + ATP = L-aspartyl-tRNA(Asx) + AMP + diphosphate. In terms of biological role, aspartyl-tRNA synthetase with relaxed tRNA specificity since it is able to aspartylate not only its cognate tRNA(Asp) but also tRNA(Asn). Reaction proceeds in two steps: L-aspartate is first activated by ATP to form Asp-AMP and then transferred to the acceptor end of tRNA(Asp/Asn). This chain is Aspartate--tRNA(Asp/Asn) ligase, found in Methylococcus capsulatus (strain ATCC 33009 / NCIMB 11132 / Bath).